Reading from the N-terminus, the 413-residue chain is Chemotactic signal transduction system substrate-binding protein BasB (413 aa).

An N-terminal signal peptide occupies residues 1-31; it reads MHSTTRREWLGAIGATAATGLAGCAGVGGAG.

The protein localises to the cell membrane. Its function is as follows. Mediates chemotaxis towards five attractant amino acids (leucine, isoleucine, valine, methionine and cysteine). May function as a receptor that binds the amino acids and transduces a signal to BasT. Has probably no additional role in transport. This Halobacterium salinarum (strain ATCC 29341 / DSM 671 / R1) protein is Chemotactic signal transduction system substrate-binding protein BasB (basB).